The sequence spans 320 residues: Cytochrome c biogenesis protein CcsA (320 aa).

The next 7 membrane-spanning stretches (helical) occupy residues 13–33 (ISFS…FLLV), 46–66 (GMIV…IYSG), 73–93 (LYES…VSYL), 147–167 (MVLG…LLVI), 226–246 (IISL…VWAN), 259–274 (ETWA…IYFH), and 289–309 (VASM…LLGI).

The protein belongs to the CcmF/CycK/Ccl1/NrfE/CcsA family. May interact with Ccs1.

The protein resides in the plastid. It localises to the chloroplast thylakoid membrane. Required during biogenesis of c-type cytochromes (cytochrome c6 and cytochrome f) at the step of heme attachment. In Gossypium barbadense (Sea Island cotton), this protein is Cytochrome c biogenesis protein CcsA.